Here is a 439-residue protein sequence, read N- to C-terminus: Ribosomal protein uS12 methylthiotransferase RimO (439 aa).

One can recognise an MTTase N-terminal domain in the interval 5 to 115 (PKIGFVSLGC…LIEAVHTHAP (111 aa)). Positions 14, 50, 79, 146, 150, and 153 each coordinate [4Fe-4S] cluster. The Radical SAM core domain occupies 132–369 (LTPRHYSYLK…MGLQAQISAD (238 aa)). The TRAM domain occupies 372–439 (QRFVGTEQQV…ESTEYDLIAD (68 aa)).

Belongs to the methylthiotransferase family. RimO subfamily. The cofactor is [4Fe-4S] cluster.

The protein resides in the cytoplasm. It catalyses the reaction L-aspartate(89)-[ribosomal protein uS12]-hydrogen + (sulfur carrier)-SH + AH2 + 2 S-adenosyl-L-methionine = 3-methylsulfanyl-L-aspartate(89)-[ribosomal protein uS12]-hydrogen + (sulfur carrier)-H + 5'-deoxyadenosine + L-methionine + A + S-adenosyl-L-homocysteine + 2 H(+). In terms of biological role, catalyzes the methylthiolation of an aspartic acid residue of ribosomal protein uS12. This is Ribosomal protein uS12 methylthiotransferase RimO from Francisella philomiragia subsp. philomiragia (strain ATCC 25017 / CCUG 19701 / FSC 153 / O#319-036).